We begin with the raw amino-acid sequence, 1198 residues long: Potassium/sodium hyperpolarization-activated cyclic nucleotide-gated channel 4 (1198 aa).

Topologically, residues 1–266 (MDKLPPSMRK…PYSDFRFYWD (266 aa)) are cytoplasmic. The interval 25–183 (IMDEEEDGEE…PASASCEQPS (159 aa)) is disordered. The span at 26-36 (MDEEEDGEEEG) shows a compositional bias: acidic residues. Residues 105–118 (SRGGGSGGAGGGSS) are compositionally biased toward gly residues. Positions 121 to 132 (HLHDSAEERRLI) are enriched in basic and acidic residues. S139 carries the post-translational modification Phosphoserine. Residues 164–174 (ASPPPQQPPQP) show a composition bias toward pro residues. Residues 209–260 (GQSGFMQRQFGAMLQPGVNKFSLRMFGSQKAVEREQERVKSAGFWIIHPYSD) are involved in subunit assembly. Residues 267–287 (LTMLLLMVGNLIIIPVGITFF) form a helical membrane-spanning segment. Over 288–293 (KDENTT) the chain is Extracellular. The helical transmembrane segment at 294-314 (PWIVFNVVSDTFFLIDLVLNF) threads the bilayer. Over 315–340 (RTGIVVEDNTEIILDPQRIKMKYLKS) the chain is Cytoplasmic. A helical membrane pass occupies residues 341–361 (WFVVDFISSIPVDYIFLIVET). The Extracellular segment spans residues 362-368 (RIDSEVY). A helical; Voltage-sensor transmembrane segment spans residues 369 to 389 (KTARALRIVRFTKILSLLRLL). At 390–420 (RLSRLIRYIHQWEEIFHMTYDLASAVVRIVN) the chain is on the cytoplasmic side. A helical transmembrane segment spans residues 421 to 441 (LIGMMLLLCHWDGCLQFLVPM). At 442 to 464 (LQDFPHDCWVSINGMVNNSWGKQ) the chain is on the extracellular side. N458 carries an N-linked (GlcNAc...) asparagine glycan. Residues 465–486 (YSYALFKAMSHMLCIGYGRQAP) constitute an intramembrane region (pore-forming). At 487-496 (VGMSDVWLTM) the chain is on the extracellular side. Residues 497–517 (LSMIVGATCYAMFIGHATALI) form a helical membrane-spanning segment. The Cytoplasmic portion of the chain corresponds to 518–1198 (QSLDSSRRQY…PVRSKLPSNL (681 aa)). Residues Y559, K562, F564, and E566 each coordinate 3',5'-cyclic GMP. G659, E660, C662, R669, T670, V673, and R710 together coordinate 3',5'-cyclic AMP. Residues 804–1198 (AIFRPPPGPG…PVRSKLPSNL (395 aa)) are disordered. Low complexity-rich tracts occupy residues 831 to 856 (SLIP…SSSS) and 866 to 880 (SAPP…SSSS). A compositionally biased stretch (pro residues) spans 881–894 (SPPPGACSSPPAPT). 3 stretches are compositionally biased toward low complexity: residues 895-905 (PSTSTAATTTG), 913-937 (LGGS…SPQA), and 965-985 (RSPS…SPGL). The segment covering 1027–1040 (GHSPGPPRTFPSAP) has biased composition (pro residues). Over residues 1043–1054 (ASGSHGSLLLPP) the composition is skewed to low complexity. 2 positions are modified to phosphoserine: S1103 and S1106. Over residues 1120 to 1132 (AGGGSGSSGGLGP) the composition is skewed to gly residues.

Belongs to the potassium channel HCN family. As to quaternary structure, homotetramer. The potassium channel is composed of a homo- or heterotetrameric complex of pore-forming subunits. Interacts with PEX5L with a 4:4 HCN4:PEX5L stoichiometry; reduces the effects of cAMP on the voltage-dependence and rate of activation. Interacts with IRAG1; regulates HCN4 channel activity. Interacts with IRAG2; regulates HCN4 channel activity. Post-translationally, S-palmitoylated. As to expression, highly expressed in pyramidal and granule layer of the hippocampus, in thalamus anterior nucleus, in the supraoptic nucleus in hypothalamus, in cerebellum, and in trapezoid nuclei and superior olivary complex in the auditory system. Detected in a subset of elongated cells in taste buds.

The protein resides in the cell membrane. The enzyme catalyses K(+)(in) = K(+)(out). The catalysed reaction is Na(+)(in) = Na(+)(out). With respect to regulation, activated by cAMP and at 100 times higher concentrationsand to a lesser extent by cGMP and cCMP. cAMP binding causes a conformation change that leads to the assembly of an active tetramer and channel opening. Binding of cAMP removes a tonic inhibition conferred by cyclic nucleotide-binding domain (CNBD) on channel opening. Cyclic dinucleotides can modulate HCN4 channel; cyclic dinucleotides acting as potent antagonists of cAMP. Inhibited by extracellular Cs(+) ions. Auxiliary subunits can also regulate HCN4 channel. IRAG1 causes a gain-of-function by shifting HCN4 activation to more depolarized membrane potentials in the absence of cAMP. In contrast, IRAG2 causes a loss-of-function by inhibiting cAMP-dependent potentiation of HCN4 activation. In terms of biological role, hyperpolarization-activated ion channel that are permeable to Na(+) and K(+) ions with very slow activation and inactivation. Exhibits higher selectivity for K(+) over Na(+) ions. Contributes to the native pacemaker currents in heart (If) that regulate the rhythm of heart beat. Contributes to the native pacemaker currents in neurons (Ih). May mediate responses to sour stimuli. In Rattus norvegicus (Rat), this protein is Potassium/sodium hyperpolarization-activated cyclic nucleotide-gated channel 4 (Hcn4).